The chain runs to 396 residues: 1-deoxy-D-xylulose 5-phosphate reductoisomerase (396 aa).

Residues T15, G16, S17, I18, G41, and N129 each contribute to the NADPH site. Position 130 (K130) interacts with 1-deoxy-D-xylulose 5-phosphate. E131 lines the NADPH pocket. D155 contacts Mn(2+). The 1-deoxy-D-xylulose 5-phosphate site is built by S156, E157, S182, and H205. Position 157 (E157) interacts with Mn(2+). Residue G211 coordinates NADPH. The 1-deoxy-D-xylulose 5-phosphate site is built by S218, N223, K224, and E227. E227 lines the Mn(2+) pocket.

Belongs to the DXR family. The cofactor is Mg(2+). Mn(2+) is required as a cofactor.

It catalyses the reaction 2-C-methyl-D-erythritol 4-phosphate + NADP(+) = 1-deoxy-D-xylulose 5-phosphate + NADPH + H(+). It functions in the pathway isoprenoid biosynthesis; isopentenyl diphosphate biosynthesis via DXP pathway; isopentenyl diphosphate from 1-deoxy-D-xylulose 5-phosphate: step 1/6. Catalyzes the NADPH-dependent rearrangement and reduction of 1-deoxy-D-xylulose-5-phosphate (DXP) to 2-C-methyl-D-erythritol 4-phosphate (MEP). In Xanthomonas axonopodis pv. citri (strain 306), this protein is 1-deoxy-D-xylulose 5-phosphate reductoisomerase.